Reading from the N-terminus, the 289-residue chain is Cyclin-dependent kinase inhibitor 4 (289 aa).

Disordered stretches follow at residues 1–31, 56–160, and 227–248; these read MGKY…ESSI, LQQQ…VSES, and SESN…TTPE. A compositionally biased stretch (gly residues) spans 13-28; it reads AGAGAGGGGGGGGGGE. Low complexity predominate over residues 56–80; sequence LQQQQQRCLLQKPSSPSSLPPTSAS. Residues 134–144 show a composition bias toward polar residues; the sequence is CGRNPNPRSNL.

It belongs to the CDI family. ICK/KRP subfamily. Specifically interacts with CDKA-1, but not with CDKB1-1. Interacts with CYCD4-1. Binds to FBL17. As to expression, expressed in leaves and flowers and at lower levels in roots.

The protein resides in the nucleus. The protein localises to the nucleoplasm. Its function is as follows. Binds and inhibits CYCD2-1/CDKA-1 complex kinase activity. May target specifically CDKA-1. The protein is Cyclin-dependent kinase inhibitor 4 (KRP4) of Arabidopsis thaliana (Mouse-ear cress).